The primary structure comprises 507 residues: GMP synthase [glutamine-hydrolyzing] 1 (507 aa).

Positions 4-193 (KIIILDFGSQ…VVDVCGCKQD (190 aa)) constitute a Glutamine amidotransferase type-1 domain. The active-site Nucleophile is C79. Catalysis depends on residues H167 and E169. A GMPS ATP-PPase domain is found at 194 to 382 (WSPASFIEST…LGMPEHLITR (189 aa)). 221-227 (SGGVDSS) is a binding site for ATP.

In terms of assembly, homodimer.

It catalyses the reaction XMP + L-glutamine + ATP + H2O = GMP + L-glutamate + AMP + diphosphate + 2 H(+). It functions in the pathway purine metabolism; GMP biosynthesis; GMP from XMP (L-Gln route): step 1/1. In terms of biological role, catalyzes the synthesis of GMP from XMP. This chain is GMP synthase [glutamine-hydrolyzing] 1 (guaA1), found in Bacteroides thetaiotaomicron (strain ATCC 29148 / DSM 2079 / JCM 5827 / CCUG 10774 / NCTC 10582 / VPI-5482 / E50).